Reading from the N-terminus, the 238-residue chain is Small ribosomal subunit protein uS3 (238 aa).

The 71-residue stretch at 39–109 (IRTFINQQLA…TIKVNVVEVN (71 aa)) folds into the KH type-2 domain. A disordered region spans residues 215–238 (EAVPREATRRSPQRRLPQFENRSN).

It belongs to the universal ribosomal protein uS3 family. In terms of assembly, part of the 30S ribosomal subunit. Forms a tight complex with proteins S10 and S14.

In terms of biological role, binds the lower part of the 30S subunit head. Binds mRNA in the 70S ribosome, positioning it for translation. The protein is Small ribosomal subunit protein uS3 of Thermosynechococcus vestitus (strain NIES-2133 / IAM M-273 / BP-1).